Reading from the N-terminus, the 273-residue chain is NADPH-dependent 7-cyano-7-deazaguanine reductase (273 aa).

Residue 80 to 82 (IES) coordinates substrate. 82-83 (SK) is an NADPH binding site. Cys-180 acts as the Thioimide intermediate in catalysis. The active-site Proton donor is the Asp-187. Residue 219–220 (HE) participates in substrate binding. 248-249 (RG) provides a ligand contact to NADPH.

The protein belongs to the GTP cyclohydrolase I family. QueF type 2 subfamily. As to quaternary structure, homodimer.

It localises to the cytoplasm. The enzyme catalyses 7-aminomethyl-7-carbaguanine + 2 NADP(+) = 7-cyano-7-deazaguanine + 2 NADPH + 3 H(+). Its pathway is tRNA modification; tRNA-queuosine biosynthesis. Its function is as follows. Catalyzes the NADPH-dependent reduction of 7-cyano-7-deazaguanine (preQ0) to 7-aminomethyl-7-deazaguanine (preQ1). The chain is NADPH-dependent 7-cyano-7-deazaguanine reductase from Bordetella avium (strain 197N).